Reading from the N-terminus, the 431-residue chain is Nocturnin (431 aa).

The N-terminal 75 residues, 1-75, are a transit peptide targeting the mitochondrion; that stretch reads MFHSPRRLCS…SMGTGTSRLY (75 aa). Positions 20-31 are enriched in low complexity; sequence LRRLPAPGLRRP. The interval 20-41 is disordered; the sequence is LRRLPAPGLRRPLSPPAAVPRP. Pro residues predominate over residues 32–41; it reads LSPPAAVPRP. Glu-195 serves as a coordination point for Mg(2+). Residues Glu-195, 219–221, Asn-263, 286–289, and 324–326 each bind substrate; these read KPW, HLKA, and DFN. Residues 343 to 353 form an interaction with PPARG region; it reads NLNSAYKLLSA. His-414 contributes to the substrate binding site.

The protein belongs to the CCR4/nocturin family. In terms of assembly, interacts with PPARG. Mg(2+) is required as a cofactor. In terms of tissue distribution, adipose tissue. Expression is higher in subcutaneous adipose tissue as compared to visceral adipose tissue.

Its subcellular location is the cytoplasm. The protein resides in the nucleus. It localises to the perinuclear region. It is found in the mitochondrion. The catalysed reaction is NADP(+) + H2O = phosphate + NAD(+). It carries out the reaction NADPH + H2O = phosphate + NADH. Its function is as follows. Phosphatase which catalyzes the conversion of NADP(+) to NAD(+) and of NADPH to NADH. Shows a small preference for NADPH over NADP(+). Represses translation and promotes degradation of target mRNA molecules. Plays an important role in post-transcriptional regulation of metabolic genes under circadian control. Exerts a rhythmic post-transcriptional control of genes necessary for metabolic functions including nutrient absorption, glucose/insulin sensitivity, lipid metabolism, adipogenesis, inflammation and osteogenesis. Plays an important role in favoring adipogenesis over osteoblastogenesis and acts as a key regulator of the adipogenesis/osteogenesis balance. Promotes adipogenesis by facilitating PPARG nuclear translocation which activates its transcriptional activity. Regulates circadian expression of NOS2 in the liver and negatively regulates the circadian expression of IGF1 in the bone. Critical for proper development of early embryos. This chain is Nocturnin, found in Homo sapiens (Human).